The chain runs to 420 residues: Serine palmitoyltransferase (420 aa).

Residues 1-21 (MKHNLQDNLQGEQMANTNSNG) are compositionally biased toward polar residues. The tract at residues 1–25 (MKHNLQDNLQGEQMANTNSNGGKKP) is disordered. Residues 132-133 (GM), H233, T261, and S263 each bind pyridoxal 5'-phosphate. Residue K264 is modified to N6-(pyridoxal phosphate)lysine.

Belongs to the class-II pyridoxal-phosphate-dependent aminotransferase family. Homodimer. Pyridoxal 5'-phosphate serves as cofactor.

The protein localises to the cytoplasm. Its subcellular location is the cell inner membrane. The enzyme catalyses L-serine + hexadecanoyl-CoA + H(+) = 3-oxosphinganine + CO2 + CoA. It functions in the pathway lipid metabolism; sphingolipid metabolism. Significantly inhibited by palmitoyl-CoA concentrations greater than 100 uM. Catalyzes the condensation of L-serine with palmitoyl-CoA (hexadecanoyl-CoA) to produce 3-oxosphinganine. In Bacteriovorax stolpii (Bdellovibrio stolpii), this protein is Serine palmitoyltransferase.